The chain runs to 336 residues: PTS system glucitol/sorbitol-specific EIIB component (336 aa).

One can recognise a PTS EIIB type-5 domain in the interval 3 to 195 (KYNAIKIVKG…AVQSMITTIL (193 aa)). Cysteine 75 acts as the Phosphocysteine intermediate; for EIIB activity in catalysis. At cysteine 75 the chain carries Phosphocysteine; by EIIA. 5 helical membrane passes run 194–214 (ILPFMAFVAMLIGIIQGSGFG), 228–248 (GIGLMILGFICSIPLLSALLG), 250–270 (GAVIAQIVGTLIGVEIGKGTI), 278–298 (ALFAINTQCACDFIPVGLGLA), and 312–332 (VLYSRFMIGVPRVAVAWVASI).

The protein localises to the cell membrane. It catalyses the reaction D-sorbitol(out) + N(pros)-phospho-L-histidyl-[protein] = D-sorbitol 6-phosphate(in) + L-histidyl-[protein]. In terms of biological role, the phosphoenolpyruvate-dependent sugar phosphotransferase system (sugar PTS), a major carbohydrate active transport system, catalyzes the phosphorylation of incoming sugar substrates concomitantly with their translocation across the cell membrane. The enzyme II complex composed of SrlA, SrlB and SrlE is involved in glucitol/sorbitol transport. The chain is PTS system glucitol/sorbitol-specific EIIB component (srlE) from Clostridium beijerinckii (strain ATCC 51743 / NCIMB 8052) (Clostridium acetobutylicum).